A 465-amino-acid chain; its full sequence is Anthocyanidin 3-O-glucosyltransferase 2 (465 aa).

His-22 functions as the Proton acceptor in the catalytic mechanism. An anthocyanidin-binding residues include His-22 and Gln-87. The Charge relay role is filled by Asp-122. Thr-145 serves as a coordination point for UDP-alpha-D-glucose. Residue His-154 coordinates an anthocyanidin. Ala-345, Gln-347, His-362, Trp-365, Asn-366, Ser-367, and Glu-370 together coordinate UDP-alpha-D-glucose. Gly-385 serves as a coordination point for an anthocyanidin. Positions 386 and 387 each coordinate UDP-alpha-D-glucose.

This sequence belongs to the UDP-glycosyltransferase family. Highest expression detected in fruit, with very low levels detected in petal and leaf.

It catalyses the reaction an anthocyanidin + UDP-alpha-D-glucose + H(+) = an anthocyanidin 3-O-beta-D-glucoside + UDP. It carries out the reaction pelargonidin + UDP-alpha-D-glucose = pelargonidin 3-O-beta-D-glucoside + UDP. The enzyme catalyses cyanidin + UDP-alpha-D-glucose = cyanidin 3-O-beta-D-glucoside + UDP + H(+). Its pathway is pigment biosynthesis; anthocyanin biosynthesis. In the presence of other necessary color factors, this glycosylation reaction allows the accumulation of anthocyanin pigments. Anthocyanidins are the preferred substrates, while flavonols are only a minor substrate in vitro. The polypeptide is Anthocyanidin 3-O-glucosyltransferase 2 (Fragaria ananassa (Strawberry)).